We begin with the raw amino-acid sequence, 288 residues long: Sulfur carrier protein FdhD (288 aa).

Cysteine 122 serves as the catalytic Cysteine persulfide intermediate. Mo-bis(molybdopterin guanine dinucleotide) is bound at residue 268 to 273; that stretch reads FVRGER.

Belongs to the FdhD family.

The protein localises to the cytoplasm. In terms of biological role, required for formate dehydrogenase (FDH) activity. Acts as a sulfur carrier protein that transfers sulfur from IscS to the molybdenum cofactor prior to its insertion into FDH. The protein is Sulfur carrier protein FdhD of Anaeromyxobacter sp. (strain K).